Consider the following 632-residue polypeptide: Pentatricopeptide repeat-containing protein ELI1, chloroplastic (632 aa).

Residues 1 to 19 (MASSPLLATSLPQNQLSTT) constitute a chloroplast transit peptide. PPR repeat units lie at residues 94–128 (DLFLFTAAINTASINGLKDQAFLLYVQLLSSEINP), 129–159 (NEFTFSSLLKSCSTKSGKLIHTHVLKFGLGI), 160–194 (DPYVATGLVDVYAKGGDVVSAQKVFDRMPERSLVS), 196–221 (TAMITCYAKQGNVEAARALFDSMCER), 222–256 (DIVSWNVMIDGYAQHGFPNDALMLFQKLLAEGKPK), 258–292 (DEITVVAALSACSQIGALETGRWIHVFVKSSRIRL), 293–323 (NVKVCTGLIDMYSKCGSLEEAVLVFNDTPRK), 324–354 (DIVAWNAMIAGYAMHGYSQDALRLFNEMQGI), 360–395 (TDITFIGTLQACAHAGLVNEGIRIFESMGQEYGIKP), and 396–426 (KIEHYGCLVSLLGRAGQLKRAYETIKNMNMD). Positions 431-506 (LWSSVLGSCK…EPGISTIEIE (76 aa)) are type E motif. A required for function in RNA editing region spans residues 497-512 (EPGISTIEIENKVHEF). The segment at 507 to 537 (NKVHEFRAGDREHSKSKEIYTMLRKISERIK) is type E(+) motif. Positions 538-632 (SHGYVPNTNT…DGSCSCGDFW (95 aa)) are type DYW motif.

Belongs to the PPR family. PCMP-H subfamily. The cofactor is Zn(2+).

The protein resides in the plastid. The protein localises to the chloroplast. Functionally, plays a major role in single RNA editing events in chloroplasts. Acts as a site-recognition transacting factor involved in the edition of the site 5 of ndhB1 and ndhB2 (ndhB1-5 and ndhB2-5 sites corresponding to cytidine-830), which are plastid-encoded subunits of the NADH-plastoquinone oxidoreductase. May provide the catalytic activity for editing site conversion. This chain is Pentatricopeptide repeat-containing protein ELI1, chloroplastic, found in Arabidopsis thaliana (Mouse-ear cress).